Reading from the N-terminus, the 238-residue chain is Insulin-like growth factor-binding protein 6 (238 aa).

The signal sequence occupies residues 1 to 25 (MTWDGLPTQPLLMLLMLLFAAGSGS). The IGFBP N-terminal domain maps to 26–108 (ALAGCPGCGA…LIGQGRCQRA (83 aa)). 5 disulfide bridges follow: C30–C33, C41–C45, C58–C64, C72–C85, and C79–C105. The disordered stretch occupies residues 104-159 (RCQRARGPSEETTKESKPQGGASRSRDTNHRDRQKNPRTSAAPIRPNPVQDSEMGP). Composition is skewed to basic and acidic residues over residues 110 to 120 (GPSEETTKESK) and 127 to 138 (RSRDTNHRDRQK). Residues 157–232 (MGPCRRHLDS…SPDGQGSTQC (76 aa)) enclose the Thyroglobulin type-1 domain. 3 disulfide bridges follow: C160-C188, C199-C210, and C212-C232. The tract at residues 218-238 (QPLPVSPDGQGSTQCSARSSG) is disordered. Residues 226 to 238 (GQGSTQCSARSSG) are compositionally biased toward polar residues.

In terms of assembly, interacts (via C-terminal domain) with PHB2. Post-translationally, O-glycosylated.

The protein resides in the secreted. Functionally, IGF-binding proteins prolong the half-life of the IGFs and have been shown to either inhibit or stimulate the growth promoting effects of the IGFs on cell culture. They alter the interaction of IGFs with their cell surface receptors. Activates the MAPK signaling pathway and induces cell migration. The sequence is that of Insulin-like growth factor-binding protein 6 (Igfbp6) from Mus musculus (Mouse).